The following is a 544-amino-acid chain: MAAKQVLFSDEARAKMLDGVNTLANAVKVTLGPKGRNVVLDKSFGAPTITKDGVSVAKEIELEDKFENMGAQIVKEVASKTADVAGDGTTTATVLAQALLTEGLKAVAAGMNPMDLKRGIDKATARLVEELKALSKPCSDPKSIEQVGTISANSDATVGKLIADAMAKVGKEGVITVEEGKGFEDELDVVEGMQFDRGYLSPYFATNQENMTTDLENPYILIVDKKISNIRDLLPILEGVSKSGRALLIIAEDVESEALATLVVNNMRGVVKVCAVKAPGFGDRRKAMLEDIATLTGATFVSEDLSMKLEETNMEHLGTASRVLVTKDNTTIIDGAGEKEAIAKRINVIKANIAEANSDYDREKLQERLAKLSGGVAVIKVGAVTEAEMKEKKDRVDDALHATRAAVEEGIVAGGGVALIRAQKALDGLTGENDDQNHGIALLRKAIEAPLRQIVSNAGGESSVVVNQVKANQGNYGYNAANDTYGDMVEMGILDPTKVTRSALQHAASIAGLMITTEAMIGEIKEAAPAMPMGGGMGGMPGMI.

ATP contacts are provided by residues 30-33, K51, 87-91, G415, 479-481, and D495; these read TLGP, DGTTT, and NAA.

Belongs to the chaperonin (HSP60) family. As to quaternary structure, forms a cylinder of 14 subunits composed of two heptameric rings stacked back-to-back. Interacts with the co-chaperonin GroES.

Its subcellular location is the cytoplasm. The enzyme catalyses ATP + H2O + a folded polypeptide = ADP + phosphate + an unfolded polypeptide.. In terms of biological role, together with its co-chaperonin GroES, plays an essential role in assisting protein folding. The GroEL-GroES system forms a nano-cage that allows encapsulation of the non-native substrate proteins and provides a physical environment optimized to promote and accelerate protein folding. The polypeptide is Chaperonin GroEL (Francisella tularensis subsp. tularensis (strain WY96-3418)).